A 50-amino-acid chain; its full sequence is U37-theraphotoxin-Cg1a (50 aa).

A signal peptide spans 1–19; it reads MRVLLIIAGLALLSVVCYT.

This sequence belongs to the neurotoxin 10 (Hwtx-1) family. 67 (Jztx-67) subfamily. Expressed by the venom gland.

The protein localises to the secreted. This chain is U37-theraphotoxin-Cg1a, found in Chilobrachys guangxiensis (Chinese earth tiger tarantula).